An 88-amino-acid chain; its full sequence is Protein Aeq5-like1 (88 aa).

Residues 1–20 form the signal peptide; it reads MKSVIAVLVLSLVLVNFTQA. 4 disulfide bridges follow: Cys29–Cys68, Cys33–Cys64, Cys40–Cys56, and Cys47–Cys53.

As to expression, is expressed in the ectodermal cells of gastrulae and planulae. Is also noticeable in the endoderm in late planulae. In the primary polyps, is expressed in both ectoderm (sensory neurons) and endoderm (ganglions). Is not expressed in nematocytes.

In terms of biological role, probable neuropeptide. The sequence is that of Protein Aeq5-like1 from Nematostella vectensis (Starlet sea anemone).